Consider the following 190-residue polypeptide: Large ribosomal subunit protein bL25 (190 aa).

This sequence belongs to the bacterial ribosomal protein bL25 family. CTC subfamily. In terms of assembly, part of the 50S ribosomal subunit; part of the 5S rRNA/L5/L18/L25 subcomplex. Contacts the 5S rRNA. Binds to the 5S rRNA independently of L5 and L18.

Functionally, this is one of the proteins that binds to the 5S RNA in the ribosome where it forms part of the central protuberance. This Neisseria meningitidis serogroup C (strain 053442) protein is Large ribosomal subunit protein bL25.